Here is a 557-residue protein sequence, read N- to C-terminus: Eukaryotic translation initiation factor 3 subunit D-2 (557 aa).

The tract at residues 292-306 is RNA gate; sequence QFDMLTVNETALEPP. The interval 533 to 557 is disordered; that stretch reads FDSDNNDGEETSDDRPFLNSKDNKL. Positions 545-557 are enriched in basic and acidic residues; the sequence is DDRPFLNSKDNKL.

The protein belongs to the eIF-3 subunit D family. Component of the eukaryotic translation initiation factor 3 (eIF-3) complex. The eIF-3 complex interacts with pix.

The protein localises to the cytoplasm. MRNA cap-binding component of the eukaryotic translation initiation factor 3 (eIF-3) complex, which is involved in protein synthesis of a specialized repertoire of mRNAs and, together with other initiation factors, stimulates binding of mRNA and methionyl-tRNAi to the 40S ribosome. The eIF-3 complex specifically targets and initiates translation of a subset of mRNAs involved in cell proliferation. In the eIF-3 complex, eif3d specifically recognizes and binds the 7-methylguanosine cap of a subset of mRNAs. The protein is Eukaryotic translation initiation factor 3 subunit D-2 of Drosophila grimshawi (Hawaiian fruit fly).